The chain runs to 873 residues: Chitin synthase F (873 aa).

Positions 1-105 (MEDAHDQSSR…KSGSGLRRYP (105 aa)) are disordered. Composition is skewed to polar residues over residues 33–46 (SYPS…SQSL), 58–72 (ISSQ…QNPS), and 80–98 (ESEV…TKSG). An N-linked (GlcNAc...) asparagine glycan is attached at Asn506. Helical transmembrane passes span 532 to 554 (LVFL…FSLA), 588 to 608 (IVNN…FFLA), 621 to 641 (ILTF…SFYL), 672 to 692 (GLVL…SILY), 702 to 722 (SWAY…YAFC), 802 to 822 (LVLL…NDSV), and 841 to 861 (VILW…LWFL).

It belongs to the chitin synthase family. Class III subfamily.

It localises to the cell membrane. The catalysed reaction is [(1-&gt;4)-N-acetyl-beta-D-glucosaminyl](n) + UDP-N-acetyl-alpha-D-glucosamine = [(1-&gt;4)-N-acetyl-beta-D-glucosaminyl](n+1) + UDP + H(+). In terms of biological role, polymerizes chitin, a structural polymer of the cell wall and septum, by transferring the sugar moiety of UDP-GlcNAc to the non-reducing end of the growing chitin polymer. Plays an important role in septal growth or maintenance. Mediates colony spore formation. The protein is Chitin synthase F of Aspergillus niger (strain ATCC MYA-4892 / CBS 513.88 / FGSC A1513).